We begin with the raw amino-acid sequence, 327 residues long: DNA-directed RNA polymerase subunit alpha (327 aa).

An alpha N-terminal domain (alpha-NTD) region spans residues 1–233; it reads MQNSASEFLK…DQLSIFADLQ (233 aa). Positions 247 to 327 are alpha C-terminal domain (alpha-CTD); the sequence is IDPILLRPVD…NWPPAGLEKP (81 aa).

The protein belongs to the RNA polymerase alpha chain family. As to quaternary structure, homodimer. The RNAP catalytic core consists of 2 alpha, 1 beta, 1 beta' and 1 omega subunit. When a sigma factor is associated with the core the holoenzyme is formed, which can initiate transcription.

The enzyme catalyses RNA(n) + a ribonucleoside 5'-triphosphate = RNA(n+1) + diphosphate. Functionally, DNA-dependent RNA polymerase catalyzes the transcription of DNA into RNA using the four ribonucleoside triphosphates as substrates. This chain is DNA-directed RNA polymerase subunit alpha, found in Chromobacterium violaceum (strain ATCC 12472 / DSM 30191 / JCM 1249 / CCUG 213 / NBRC 12614 / NCIMB 9131 / NCTC 9757 / MK).